We begin with the raw amino-acid sequence, 259 residues long: Putative hydro-lyase Rxyl_2409 (259 aa).

Residues 1–24 (MGAPGAAEARERIRRGEHAGPTAG) are disordered. Positions 8–18 (EARERIRRGEH) are enriched in basic and acidic residues.

The protein belongs to the D-glutamate cyclase family.

The chain is Putative hydro-lyase Rxyl_2409 from Rubrobacter xylanophilus (strain DSM 9941 / JCM 11954 / NBRC 16129 / PRD-1).